Reading from the N-terminus, the 84-residue chain is UPF0473 protein CKL_1327 (84 aa).

The protein belongs to the UPF0473 family.

The chain is UPF0473 protein CKL_1327 from Clostridium kluyveri (strain ATCC 8527 / DSM 555 / NBRC 12016 / NCIMB 10680 / K1).